Consider the following 259-residue polypeptide: Cell division protein DivIB (259 aa).

At 1–27 (MADGKVIDIEQKVPDFREQRRRKSRRR) the chain is on the cytoplasmic side. The helical transmembrane segment at 28 to 45 (LVLYISILAFFLLFVYYF) threads the bilayer. At 46–259 (QSDYSTVGHV…QEEEEIEIEE (214 aa)) the chain is on the extracellular side. The region spanning 50–118 (STVGHVDVYG…RSITLYVDEY (69 aa)) is the POTRA domain.

The protein belongs to the FtsQ/DivIB family. DivIB subfamily.

It is found in the cell membrane. Cell division protein that may be involved in stabilizing or promoting the assembly of the division complex. In Bacillus selenitireducens (strain ATCC 700615 / DSM 15326 / MLS10), this protein is Cell division protein DivIB.